Here is a 117-residue protein sequence, read N- to C-terminus: Fluoride-specific ion channel FluC 2 (117 aa).

Transmembrane regions (helical) follow at residues 1–21 (MISI…RSAI) and 46–66 (FLIG…AFFV). Na(+) is bound by residues G71 and T74. Residues 95–115 (LFLNYSLLQFIIGFIACYIGY) traverse the membrane as a helical segment.

It belongs to the fluoride channel Fluc/FEX (TC 1.A.43) family.

Its subcellular location is the cell membrane. The enzyme catalyses fluoride(in) = fluoride(out). Its activity is regulated as follows. Na(+) is not transported, but it plays an essential structural role and its presence is essential for fluoride channel function. Its function is as follows. Fluoride-specific ion channel. Important for reducing fluoride concentration in the cell, thus reducing its toxicity. In Staphylococcus aureus (strain Mu50 / ATCC 700699), this protein is Fluoride-specific ion channel FluC 2.